The sequence spans 577 residues: Glucose-6-phosphate 1-dehydrogenase, chloroplastic (577 aa).

The tract at residues 1–20 is disordered; that stretch reads MGVQLRLNPCSSSSAATSPS. A chloroplast-targeting transit peptide spans 1 to 63; it reads MGVQLRLNPC…QPRKHFEVFS (63 aa). Residues 11–20 show a composition bias toward low complexity; sequence SSSSAATSPS. NADP(+)-binding positions include 97–104 and Arg-131; that span reads GASGDLAK. Cys-149 and Cys-157 are disulfide-bonded. Lys-234 contributes to the NADP(+) binding site. D-glucose 6-phosphate contacts are provided by residues Lys-234, 264-268, Glu-302, and Asp-321; that span reads HYLGK. Residue His-326 is the Proton acceptor of the active site. Lys-419 serves as a coordination point for NADP(+). The D-glucose 6-phosphate site is built by Lys-422 and Lys-427. Arg-428, Arg-432, and Arg-461 together coordinate NADP(+). Gln-463 is a D-glucose 6-phosphate binding site. Residues 469–471 and Arg-554 each bind NADP(+); that span reads YLK.

This sequence belongs to the glucose-6-phosphate dehydrogenase family. As to quaternary structure, homodimer. Green tissues, leaves and chloroplasts.

Its subcellular location is the plastid. The protein resides in the chloroplast. It carries out the reaction D-glucose 6-phosphate + NADP(+) = 6-phospho-D-glucono-1,5-lactone + NADPH + H(+). It participates in carbohydrate degradation; pentose phosphate pathway; D-ribulose 5-phosphate from D-glucose 6-phosphate (oxidative stage): step 1/3. Its activity is regulated as follows. Regulated by metabolites. Post-translationally inactivated by cysteine-mediated redox modification via the ferredoxin-thioredoxin system in the light and this avoids futile cycles with photosynthetic CO2 fixation. Its function is as follows. Catalyzes the rate-limiting step of the oxidative pentose-phosphate pathway, which represents a route for the dissimilation of carbohydrates besides glycolysis. The main function of this enzyme is to provide reducing power (NADPH) and pentose phosphates for fatty acid and nucleic acid synthesis which are involved in membrane synthesis and cell division. The sequence is that of Glucose-6-phosphate 1-dehydrogenase, chloroplastic from Solanum tuberosum (Potato).